Reading from the N-terminus, the 198-residue chain is Probable GTP-binding protein EngB (198 aa).

An EngB-type G domain is found at 21-195 (NFSEVAFLGR…EDIIINQTLG (175 aa)). GTP contacts are provided by residues 29–36 (GRSNVGKS), 56–60 (GKTQL), 81–84 (DLPG), 151–154 (TKCD), and 174–176 (VSN). Mg(2+) contacts are provided by Ser-36 and Thr-58.

The protein belongs to the TRAFAC class TrmE-Era-EngA-EngB-Septin-like GTPase superfamily. EngB GTPase family. Mg(2+) is required as a cofactor.

Its function is as follows. Necessary for normal cell division and for the maintenance of normal septation. In Campylobacter jejuni subsp. jejuni serotype O:23/36 (strain 81-176), this protein is Probable GTP-binding protein EngB.